The following is a 314-amino-acid chain: Probable 5-dehydro-4-deoxyglucarate dehydratase (314 aa).

This sequence belongs to the DapA family.

It carries out the reaction 5-dehydro-4-deoxy-D-glucarate + H(+) = 2,5-dioxopentanoate + CO2 + H2O. It functions in the pathway carbohydrate acid metabolism; D-glucarate degradation; 2,5-dioxopentanoate from D-glucarate: step 2/2. This Bradyrhizobium sp. (strain ORS 278) protein is Probable 5-dehydro-4-deoxyglucarate dehydratase.